A 236-amino-acid chain; its full sequence is Large ribosomal subunit protein uL1 (236 aa).

The protein belongs to the universal ribosomal protein uL1 family. Part of the 50S ribosomal subunit.

Functionally, binds directly to 23S rRNA. The L1 stalk is quite mobile in the ribosome, and is involved in E site tRNA release. Protein L1 is also a translational repressor protein, it controls the translation of the L11 operon by binding to its mRNA. In Kocuria rhizophila (strain ATCC 9341 / DSM 348 / NBRC 103217 / DC2201), this protein is Large ribosomal subunit protein uL1.